Reading from the N-terminus, the 611-residue chain is Glutamine--fructose-6-phosphate aminotransferase [isomerizing] (611 aa).

Cysteine 2 (nucleophile; for GATase activity) is an active-site residue. Residues cysteine 2–aspartate 219 enclose the Glutamine amidotransferase type-2 domain. 2 consecutive SIS domains span residues alanine 287–serine 427 and valine 460–proline 601. The active-site For Fru-6P isomerization activity is lysine 606.

Homodimer.

It localises to the cytoplasm. It carries out the reaction D-fructose 6-phosphate + L-glutamine = D-glucosamine 6-phosphate + L-glutamate. Catalyzes the first step in hexosamine metabolism, converting fructose-6P into glucosamine-6P using glutamine as a nitrogen source. The protein is Glutamine--fructose-6-phosphate aminotransferase [isomerizing] of Pseudomonas syringae pv. tomato (strain ATCC BAA-871 / DC3000).